The sequence spans 166 residues: Small ribosomal subunit protein uS5 (166 aa).

The region spanning 11-74 (LREKLVAINR…EKARANMKRV (64 aa)) is the S5 DRBM domain.

It belongs to the universal ribosomal protein uS5 family. As to quaternary structure, part of the 30S ribosomal subunit. Contacts proteins S4 and S8.

Its function is as follows. With S4 and S12 plays an important role in translational accuracy. In terms of biological role, located at the back of the 30S subunit body where it stabilizes the conformation of the head with respect to the body. The sequence is that of Small ribosomal subunit protein uS5 from Alkalilimnicola ehrlichii (strain ATCC BAA-1101 / DSM 17681 / MLHE-1).